The primary structure comprises 48 residues: Putative protein P' (48 aa).

In Bos taurus (Bovine), this protein is Putative protein P'.